A 37-amino-acid polypeptide reads, in one-letter code: Large ribosomal subunit protein bL36 (37 aa).

This sequence belongs to the bacterial ribosomal protein bL36 family.

The polypeptide is Large ribosomal subunit protein bL36 (Geobacter metallireducens (strain ATCC 53774 / DSM 7210 / GS-15)).